A 242-amino-acid chain; its full sequence is 1-(5-phosphoribosyl)-5-[(5-phosphoribosylamino)methylideneamino] imidazole-4-carboxamide isomerase (242 aa).

Asp-10 acts as the Proton acceptor in catalysis. Asp-132 acts as the Proton donor in catalysis.

Belongs to the HisA/HisF family.

The protein resides in the cytoplasm. The enzyme catalyses 1-(5-phospho-beta-D-ribosyl)-5-[(5-phospho-beta-D-ribosylamino)methylideneamino]imidazole-4-carboxamide = 5-[(5-phospho-1-deoxy-D-ribulos-1-ylimino)methylamino]-1-(5-phospho-beta-D-ribosyl)imidazole-4-carboxamide. Its pathway is amino-acid biosynthesis; L-histidine biosynthesis; L-histidine from 5-phospho-alpha-D-ribose 1-diphosphate: step 4/9. The sequence is that of 1-(5-phosphoribosyl)-5-[(5-phosphoribosylamino)methylideneamino] imidazole-4-carboxamide isomerase from Streptococcus sanguinis (strain SK36).